The chain runs to 372 residues: Spermidine/putrescine import ATP-binding protein PotA (372 aa).

The ABC transporter domain maps to 11–241 (IELRSIKKSY…PANLFVARFI (231 aa)). 43–50 (GPSGCGKT) serves as a coordination point for ATP.

It belongs to the ABC transporter superfamily. Spermidine/putrescine importer (TC 3.A.1.11.1) family. As to quaternary structure, the complex is composed of two ATP-binding proteins (PotA), two transmembrane proteins (PotB and PotC) and a solute-binding protein (PotD).

The protein localises to the cell inner membrane. The catalysed reaction is ATP + H2O + polyamine-[polyamine-binding protein]Side 1 = ADP + phosphate + polyamineSide 2 + [polyamine-binding protein]Side 1.. Functionally, part of the ABC transporter complex PotABCD involved in spermidine/putrescine import. Responsible for energy coupling to the transport system. In Haemophilus influenzae (strain 86-028NP), this protein is Spermidine/putrescine import ATP-binding protein PotA.